The sequence spans 447 residues: Cobyrinate a,c-diamide synthase (447 aa).

Residues 252-439 (KIAVAFDESF…AHQHCIGNPY (188 aa)) enclose the GATase cobBQ-type domain. Cys-331 functions as the Nucleophile in the catalytic mechanism.

The protein belongs to the CobB/CbiA family. Mg(2+) serves as cofactor.

The catalysed reaction is cob(II)yrinate + 2 L-glutamine + 2 ATP + 2 H2O = cob(II)yrinate a,c diamide + 2 L-glutamate + 2 ADP + 2 phosphate + 2 H(+). The enzyme catalyses Ni-sirohydrochlorin + 2 L-glutamine + 2 ATP + 2 H2O = Ni-sirohydrochlorin a,c-diamide + 2 L-glutamate + 2 ADP + 2 phosphate + 2 H(+). The protein operates within cofactor biosynthesis; adenosylcobalamin biosynthesis; cob(II)yrinate a,c-diamide from sirohydrochlorin (anaerobic route): step 10/10. Its function is as follows. Catalyzes the ATP-dependent amidation of the two carboxylate groups at positions a and c of cobyrinate, using either L-glutamine or ammonia as the nitrogen source. Involved in the biosynthesis of the unique nickel-containing tetrapyrrole coenzyme F430, the prosthetic group of methyl-coenzyme M reductase (MCR), which plays a key role in methanogenesis and anaerobic methane oxidation. Catalyzes the ATP-dependent amidation of the two carboxylate groups at positions a and c of Ni-sirohydrochlorin, using L-glutamine or ammonia as the nitrogen source. This chain is Cobyrinate a,c-diamide synthase, found in Methanococcus maripaludis (strain C5 / ATCC BAA-1333).